The sequence spans 604 residues: ATP-dependent RNA helicase DED1 (604 aa).

The segment covering 1–19 has biased composition (polar residues); the sequence is MAELSEQVQNLSINDNNEN. Residues 1-55 are disordered; that stretch reads MAELSEQVQNLSINDNNENGYVPPHLRGKPRSARNNSSNYNNNNGGYNGGRGGGS. At Ala2 the chain carries N-acetylalanine. The span at 34–45 shows a compositional bias: low complexity; that stretch reads RNNSSNYNNNNG. The span at 46–55 shows a compositional bias: gly residues; the sequence is GYNGGRGGGS. An Omega-N-methylarginine modification is found at Arg51. Arg62 bears the Dimethylated arginine; alternate mark. Residue Arg62 is modified to Omega-N-methylarginine; alternate. The segment covering 67 to 76 has biased composition (gly residues); that stretch reads NGGFFGGNNG. Residues 67 to 94 are disordered; sequence NGGFFGGNNGGSRSNGRSGGRWIDGKHV. The Q motif motif lies at 142–170; it reads TEFTSPPLDGLLLENIKLARFTKPTPVQK. Lys158 participates in a covalent cross-link: Glycyl lysine isopeptide (Lys-Gly) (interchain with G-Cter in ubiquitin). The 190-residue stretch at 173-362 folds into the Helicase ATP-binding domain; that stretch reads VPIVANGRDL…RDFLSDYIFL (190 aa). 186-193 is an ATP binding site; sequence AQTGSGKT. A phosphoserine mark is found at Ser215, Ser218, and Ser263. The DEAD box motif lies at 306–309; the sequence is DEAD. The Helicase C-terminal domain occupies 373 to 533; the sequence is NITQKVLYVE…EVPSFLKDAM (161 aa). Residues 533 to 604 form a disordered region; that stretch reads MMSAPGSRSN…SGGSNNSSWW (72 aa). 3 positions are modified to phosphoserine: Ser535, Ser539, and Ser543. Arg545 carries the post-translational modification Dimethylated arginine; alternate. Arg545 is subject to Omega-N-methylarginine; alternate. Phosphoserine is present on residues Ser572 and Ser576. Arg578 carries the post-translational modification Omega-N-methylarginine. A compositionally biased stretch (low complexity) spans 584–604; sequence GSDSKSSGWGNSGGSNNSSWW. The residue at position 598 (Ser598) is a Phosphoserine.

Belongs to the DEAD box helicase family. DDX3/DED1 subfamily. Interacts with the L-A virus GAG protein and the whole L-A virus particles.

It is found in the cytoplasm. It carries out the reaction ATP + H2O = ADP + phosphate + H(+). Functionally, ATP-binding RNA helicase involved in translation initiation. Remodels RNA in response to ADP and ATP concentrations by facilitating disruption, but also formation of RNA duplexes. Has weak ATP-dependent affinity for dsRNA, but strong ATP-dependent affinity for ssRNA. Acts as a virus host factor involved in the replication of the MBV and the L-A viruses by promoting the negative-strand RNA synthesis. May be involved in recognition of the preinitiation complex and DNA binding of the RNA polymerase III and play a role in mRNA splicing. The sequence is that of ATP-dependent RNA helicase DED1 from Saccharomyces cerevisiae (strain ATCC 204508 / S288c) (Baker's yeast).